A 172-amino-acid chain; its full sequence is Large ribosomal subunit protein eL20A (172 aa).

Phosphoserine is present on Ser-32. Glycyl lysine isopeptide (Lys-Gly) (interchain with G-Cter in ubiquitin) cross-links involve residues Lys-125, Lys-131, and Lys-149.

This sequence belongs to the eukaryotic ribosomal protein eL20 family. In terms of assembly, component of the large ribosomal subunit (LSU). Mature yeast ribosomes consist of a small (40S) and a large (60S) subunit. The 40S small subunit contains 1 molecule of ribosomal RNA (18S rRNA) and 33 different proteins (encoded by 57 genes). The large 60S subunit contains 3 rRNA molecules (25S, 5.8S and 5S rRNA) and 46 different proteins (encoded by 81 genes). eL20 forms multiple interactions with RNA and proteins in the central protuberance, connecting components of core functional centers that are located far apart.

The protein resides in the cytoplasm. Its function is as follows. Component of the ribosome, a large ribonucleoprotein complex responsible for the synthesis of proteins in the cell. The small ribosomal subunit (SSU) binds messenger RNAs (mRNAs) and translates the encoded message by selecting cognate aminoacyl-transfer RNA (tRNA) molecules. The large subunit (LSU) contains the ribosomal catalytic site termed the peptidyl transferase center (PTC), which catalyzes the formation of peptide bonds, thereby polymerizing the amino acids delivered by tRNAs into a polypeptide chain. The nascent polypeptides leave the ribosome through a tunnel in the LSU and interact with protein factors that function in enzymatic processing, targeting, and the membrane insertion of nascent chains at the exit of the ribosomal tunnel. The sequence is that of Large ribosomal subunit protein eL20A from Saccharomyces cerevisiae (strain ATCC 204508 / S288c) (Baker's yeast).